The primary structure comprises 112 residues: Nucleoid-associated protein FTN_1196 (112 aa).

The disordered stretch occupies residues 1-27; that stretch reads MNFDMSKLMQQAQKMQEQMKKAQQERE. A compositionally biased stretch (basic and acidic residues) spans 17 to 27; sequence EQMKKAQQERE.

Belongs to the YbaB/EbfC family. Homodimer.

The protein localises to the cytoplasm. Its subcellular location is the nucleoid. In terms of biological role, binds to DNA and alters its conformation. May be involved in regulation of gene expression, nucleoid organization and DNA protection. The chain is Nucleoid-associated protein FTN_1196 from Francisella tularensis subsp. novicida (strain U112).